The primary structure comprises 195 residues: Large ribosomal subunit protein uL18 (195 aa).

Belongs to the universal ribosomal protein uL18 family. Part of the 50S ribosomal subunit. Contacts the 5S and 23S rRNAs.

This is one of the proteins that bind and probably mediate the attachment of the 5S RNA into the large ribosomal subunit, where it forms part of the central protuberance. This chain is Large ribosomal subunit protein uL18, found in Korarchaeum cryptofilum (strain OPF8).